Reading from the N-terminus, the 232-residue chain is CLPDPAALSRRCTHPGGERRGGSGRGGAASGRRRVRFVSAVPGPEEPGSPRGGRRRRAEASCAKPRRARTAFTYEQLVALENKFRATRYLSVCERLNLALSLSLTETQVKIWFQNRRTKWKKQHPGADGAAAPAPPAAARCSPSPPRPAALPGQTFPSYAATSALFPAASPFPPGRPRRRTLRSLLGARVPRASTPRTSENPPRLCPSAPGVRNRVFLLRLASTKRKNTYML.

Disordered regions lie at residues cysteine 1–lysine 64, lysine 122–alanine 150, and leucine 185–serine 208. The homeobox DNA-binding region spans proline 65–histidine 124. The span at glycine 126–serine 142 shows a compositional bias: low complexity.

The protein belongs to the NK-1 homeobox family. Transiently expressed in the birth zone of the whole spinal cord regardless of the axial level.

The protein localises to the nucleus. The sequence is that of Homeobox protein SAX-1 (SAX1) from Gallus gallus (Chicken).